Reading from the N-terminus, the 253-residue chain is ER membrane protein complex subunit 3 (253 aa).

3 helical membrane-spanning segments follow: residues 10–30, 126–146, and 176–196; these read WVLLPISIVMVLTGVLKQYIM, FIPQTIIMWWVNHFFAGFILM, and SISWYFISVLGLNPVYNLIGL.

This sequence belongs to the EMC3 family. In terms of assembly, component of the ER membrane protein complex (EMC), which is composed of EMC1, EMC2, EMC3, EMC4, EMC5 and EMC6.

Its subcellular location is the endoplasmic reticulum membrane. Its function is as follows. The EMC seems to be required for efficient folding of proteins in the endoplasmic reticulum (ER). This chain is ER membrane protein complex subunit 3 (AIM27), found in Saccharomyces cerevisiae (strain YJM789) (Baker's yeast).